A 91-amino-acid chain; its full sequence is Probable Fe(2+)-trafficking protein (91 aa).

Belongs to the Fe(2+)-trafficking protein family. In terms of assembly, monomer.

Could be a mediator in iron transactions between iron acquisition and iron-requiring processes, such as synthesis and/or repair of Fe-S clusters in biosynthetic enzymes. The sequence is that of Probable Fe(2+)-trafficking protein from Escherichia coli O6:H1 (strain CFT073 / ATCC 700928 / UPEC).